The following is an 85-amino-acid chain: MLKLRLKRCGRKQRAVYRIVAIDVRSRREGRDLRKVGFYDPIKNQTCLNVPAILYFLEKGAQPTRTVSDILRKAEFFKEKERTLS.

This sequence belongs to the bacterial ribosomal protein bS16 family.

The protein resides in the plastid. The protein localises to the chloroplast. This Oryza nivara (Indian wild rice) protein is Small ribosomal subunit protein bS16c.